The chain runs to 286 residues: Enoyl-CoA hydratase ChsH3 (286 aa).

The MaoC-like domain maps to 163-271 (APERAPDLQV…RLVASVVAPT (109 aa)). Catalysis depends on residues Asp-189 and His-194.

It belongs to the enoyl-CoA hydratase/isomerase family. In terms of assembly, homodimer.

It carries out the reaction (22E)-3-oxochola-4,22-dien-24-oyl-CoA + H2O = (22S)-hydroxy-3-oxo-chol-4-ene-24-oyl-CoA. Its pathway is steroid metabolism; cholesterol degradation. Functionally, degradation of the cholesterol side chain involves 3 multistep beta-oxidation cycles, this is involved in the second cycle. Hydrates bulky steroid enoyl-CoA esters, has highest activity with 3-OCDO-CoA (3-oxochol-4,22-dien-24-oyl-CoA) making (22S)-HOCO-CoA, followed by octenoyl-CoA, with weaker activity on 3-OCDS-CoA (3-oxocholest-4,24-dien-26-oyl-CoA) and none on 3-OPDC-CoA (3-oxo-pregna-4,17-diene-20- carboxyl-CoA). Hydrates the same substrate as EchA19, but the 2 enzymes make different stereoisomers of the product. This chain is Enoyl-CoA hydratase ChsH3, found in Mycobacterium tuberculosis (strain ATCC 25618 / H37Rv).